Here is a 422-residue protein sequence, read N- to C-terminus: Glutamyl-tRNA reductase (422 aa).

Residues 50–53 (TCNR), Ser110, 115–117 (ETQ), and Gln121 contribute to the substrate site. Cys51 functions as the Nucleophile in the catalytic mechanism. NADP(+) is bound at residue 190–195 (GAGEMS).

The protein belongs to the glutamyl-tRNA reductase family. As to quaternary structure, homodimer.

The enzyme catalyses (S)-4-amino-5-oxopentanoate + tRNA(Glu) + NADP(+) = L-glutamyl-tRNA(Glu) + NADPH + H(+). It functions in the pathway porphyrin-containing compound metabolism; protoporphyrin-IX biosynthesis; 5-aminolevulinate from L-glutamyl-tRNA(Glu): step 1/2. In terms of biological role, catalyzes the NADPH-dependent reduction of glutamyl-tRNA(Glu) to glutamate 1-semialdehyde (GSA). This chain is Glutamyl-tRNA reductase, found in Campylobacter fetus subsp. fetus (strain 82-40).